Consider the following 266-residue polypeptide: Metallo-beta-lactamase VIM-2 (266 aa).

A signal peptide spans Met-1–Ala-20. Zn(2+) is bound by residues His-114, His-116, and Cys-198.

Belongs to the metallo-beta-lactamase superfamily. Class-B beta-lactamase family. Monomer. Requires Zn(2+) as cofactor.

The protein localises to the periplasm. It catalyses the reaction a beta-lactam + H2O = a substituted beta-amino acid. With respect to regulation, inhibited by chelating agents such as EDTA. Inhibited by a fungal natural product, aspergillomarasmine A (AMA). Inhibited by 2-triazolylthioacetamides. Functionally, class B beta-lactamase which confers resistance to the beta-lactam antibiotics, including penicillins, cephalosporins and carbapenems. Acts via hydrolysis of the beta-lactam ring. Has penicillin-, cephalosporin- and carbapenem-hydrolyzing activities. The chain is Metallo-beta-lactamase VIM-2 from Escherichia coli.